The chain runs to 348 residues: Probable dual-specificity RNA methyltransferase RlmN (348 aa).

Catalysis depends on glutamate 89, which acts as the Proton acceptor. The Radical SAM core domain maps to 95–328 (HKNRNTVCVS…VTLRISYGSK (234 aa)). A disulfide bridge connects residues cysteine 102 and cysteine 333. Residues cysteine 109, cysteine 113, and cysteine 116 each contribute to the [4Fe-4S] cluster site. Residues 159–160 (GE), serine 191, 214–216 (SLH), and asparagine 290 each bind S-adenosyl-L-methionine. The active-site S-methylcysteine intermediate is the cysteine 333.

This sequence belongs to the radical SAM superfamily. RlmN family. [4Fe-4S] cluster is required as a cofactor.

It is found in the cytoplasm. The catalysed reaction is adenosine(2503) in 23S rRNA + 2 reduced [2Fe-2S]-[ferredoxin] + 2 S-adenosyl-L-methionine = 2-methyladenosine(2503) in 23S rRNA + 5'-deoxyadenosine + L-methionine + 2 oxidized [2Fe-2S]-[ferredoxin] + S-adenosyl-L-homocysteine. It catalyses the reaction adenosine(37) in tRNA + 2 reduced [2Fe-2S]-[ferredoxin] + 2 S-adenosyl-L-methionine = 2-methyladenosine(37) in tRNA + 5'-deoxyadenosine + L-methionine + 2 oxidized [2Fe-2S]-[ferredoxin] + S-adenosyl-L-homocysteine. In terms of biological role, specifically methylates position 2 of adenine 2503 in 23S rRNA and position 2 of adenine 37 in tRNAs. The polypeptide is Probable dual-specificity RNA methyltransferase RlmN (Dictyoglomus turgidum (strain DSM 6724 / Z-1310)).